The primary structure comprises 648 residues: Putative potassium transport protein DDB_G0292412 (648 aa).

A helical membrane pass occupies residues 48-68; that stretch reads LFLLVILVQLGSTVLLTLPIV. Asn81 carries an N-linked (GlcNAc...) asparagine glycan. Disordered regions lie at residues 106 to 145 and 223 to 261; these read HDFKDDDDENDNNNNEENDDNDDESYQHNNNNNEEHDDND and QQQQQPSTTTTTTTTTNSTLNKSTNNSTNNNNNTNDSQS. Residues 110 to 129 are compositionally biased toward acidic residues; the sequence is DDDDENDNNNNEENDDNDDE. The stretch at 199-227 forms a coiled coil; the sequence is IIQQQQQQQQQQQQQQQQQQQQQQQQQQQ. 6 N-linked (GlcNAc...) asparagine glycosylation sites follow: Asn239, Asn243, Asn247, Asn248, Asn254, and Asn257. Helical transmembrane passes span 313–333, 353–373, 385–405, 443–463, 472–491, and 505–525; these read LLVIIPCYIITIYILGFISIG, GWWWSLFHTFSAFNNAGLALF, FLLITLSILIFLGNTLFPVFL, VQLFVIWCIFNVSQIALMALL, NMNYGTILLNYYFSSISTRT, and SVLLLFVGLMFVSSYPFIISL. The N-linked (GlcNAc...) asparagine glycan is linked to Asn536. A run of 3 helical transmembrane segments spans residues 550-570, 571-591, and 592-612; these read IFVPYICILFIAIFESQLLES, GVITVFQILFEAISAFGNVGL, and SISITLSTYSKLVFIALMLAG.

This sequence belongs to the TrkH potassium transport family.

It localises to the membrane. May function as a potassium transporter. The protein is Putative potassium transport protein DDB_G0292412 of Dictyostelium discoideum (Social amoeba).